We begin with the raw amino-acid sequence, 172 residues long: Cytidylate kinase (172 aa).

Residue 8–16 (GPPGSGKST) coordinates ATP.

This sequence belongs to the cytidylate kinase family. Type 2 subfamily.

It is found in the cytoplasm. It carries out the reaction CMP + ATP = CDP + ADP. The catalysed reaction is dCMP + ATP = dCDP + ADP. This is Cytidylate kinase from Ignicoccus hospitalis (strain KIN4/I / DSM 18386 / JCM 14125).